The sequence spans 566 residues: MKMQKGNVLLMFGLLLHLEAATNSNETSTSANTGSSVISSGASTATNSGSSVTSSGVSTATISGSSVTSNGVSIVTNSEFHTTSSGISTATNSEFSTVSSGISIATNSESSTTSSGASTATNSESSTPSSGASTATNSDSSTTSSGASTATNSDSSTTSSEASTATNSESSTTSSGASTATNSESSTVSSRASTATNSESSTTSSGASTATNSESRTTSNGAGTATNSESSTTSSGASTATNSESSTPSSGAGTATNSESSTTSSGAGTATNSESSTVSSGISTVTNSESSTPSSGANTATNSESSTTSSGANTATNSDSSTTSSGASTATNSESSTTSSGASTATNSESSTTSSGASTATNSGSSTTSSGTSTATNSESSTVSSGASTATTSESSTTSSGASTATNSESSTVSSGASTATNSESSTTSSGANTATNSGSSVTSAGSGTAALTGMHTTSHSASTAVSEAKPGGSLVPWEIFLITLVSVVAAVGLFAGLFFCVRNSLSLRNTFNTAVYHPHGLNHGLGPGPGGNHGAPHRPRWSPNWFWRRPVSSIAMEMSGRNSGP.

The first 24 residues, 1–24 (MKMQKGNVLLMFGLLLHLEAATNS), serve as a signal peptide directing secretion. A glycan (N-linked (GlcNAc...) asparagine) is linked at asparagine 25. The tract at residues 25 to 68 (NETSTSANTGSSVISSGASTATNSGSSVTSSGVSTATISGSSVT) is disordered. The Extracellular portion of the chain corresponds to 25 to 479 (NETSTSANTG…KPGGSLVPWE (455 aa)). Tandem repeats lie at residues 31 to 44 (ANTGSSVISSGAST), 45 to 59 (ATNSGSSVTSSGVST), 60 to 74 (ATISGSSVTSNGVSI), 75 to 89 (VTNSEFHTTSSGIST), 90 to 104 (ATNSEFSTVSSGISI), 105 to 119 (ATNSESSTTSSGAST), 120 to 134 (ATNSESSTPSSGAST), 135 to 149 (ATNSDSSTTSSGAST), 150 to 164 (ATNSDSSTTSSEAST), 165 to 179 (ATNSESSTTSSGAST), 180 to 194 (ATNSESSTVSSRAST), 195 to 209 (ATNSESSTTSSGAST), 210 to 224 (ATNSESRTTSNGAGT), 225 to 239 (ATNSESSTTSSGAST), 244 to 254 (ESSTPSSGAGT), 255 to 269 (ATNSESSTTSSGAGT), 270 to 284 (ATNSESSTVSSGIST), 285 to 299 (VTNSESSTPSSGANT), 300 to 314 (ATNSESSTTSSGANT), 315 to 329 (ATNSDSSTTSSGAST), 330 to 344 (ATNSESSTTSSGAST), 345 to 359 (ATNSESSTTSSGAST), 360 to 374 (ATNSGSSTTSSGTST), 375 to 389 (ATNSESSTVSSGAST), 390 to 404 (ATTSESSTTSSGAST), 405 to 419 (ATNSESSTVSSGAST), 420 to 434 (ATNSESSTTSSGANT), and 435 to 449 (ATNSGSSVTSAGSGT). A 28 X 15 AA approximate tandem repeats region spans residues 31 to 435 (ANTGSSVISS…STTSSGANTA (405 aa)). The segment at 106–456 (TNSESSTTSS…SGTAALTGMH (351 aa)) is disordered. Residues 480-500 (IFLITLVSVVAAVGLFAGLFF) traverse the membrane as a helical segment. The Cytoplasmic segment spans residues 501-566 (CVRNSLSLRN…MEMSGRNSGP (66 aa)). The tract at residues 521–566 (GLNHGLGPGPGGNHGAPHRPRWSPNWFWRRPVSSIAMEMSGRNSGP) is cytoplasmic tail.

Post-translationally, O-glycosylated. In terms of tissue distribution, expressed in lung, large intestine, thymus, and testis. Expressed in normal and malignant bronchial epithelial cells.

It is found in the cell membrane. The chain is Mucin-21 (MUC21) from Homo sapiens (Human).